A 769-amino-acid polypeptide reads, in one-letter code: Serine/threonine-protein kinase PLK4 (769 aa).

A Protein kinase domain is found at 14-267 (YEVQHLLGKG…LEAVLCHPFM (254 aa)). Residues 20 to 28 (LGKGGFATV) and K43 each bind ATP. The Proton acceptor role is filled by D138. One can recognise a Cryptic POLO box 1 (CPB1) domain in the interval 381–498 (EDRISVPPLN…ARFVGLVKSK (118 aa)). In terms of domain architecture, Cryptic POLO box 2 (CPB2) spans 499–602 (TPKVTYFSTL…GRRPITDVQP (104 aa)). Positions 660–739 (PIKRINVPDI…IPNIQLKLKT (80 aa)) constitute a POLO box domain.

It belongs to the protein kinase superfamily. Ser/Thr protein kinase family. CDC5/Polo subfamily. In terms of assembly, homodimer. In terms of processing, ubiquitinated by the SCF(Slimb) ubiquitin ligase complex; leading to its degradation by the proteasome during interphase and regulating centriole number and ensuring the block to centriole reduplication.

The protein resides in the cytoplasm. It localises to the cytoskeleton. Its subcellular location is the microtubule organizing center. It is found in the centrosome. The protein localises to the centriole. The enzyme catalyses L-seryl-[protein] + ATP = O-phospho-L-seryl-[protein] + ADP + H(+). The catalysed reaction is L-threonyl-[protein] + ATP = O-phospho-L-threonyl-[protein] + ADP + H(+). Serine/threonine-protein kinase that plays a central role in centriole duplication. Able to trigger procentriole formation on the surface of the mother centriole cylinder, using mother centriole as a platform, leading to the recruitment of centriole biogenesis proteins such as sas-6. When overexpressed, it is able to induce centrosome amplification through the simultaneous generation of multiple procentrioles adjoining each parental centriole during S phase. Centrosome amplification following overexpression can initiate tumorigenesis, highlighting the importance of centrosome regulation in cancers. This Drosophila sechellia (Fruit fly) protein is Serine/threonine-protein kinase PLK4 (SAK).